Consider the following 192-residue polypeptide: Holliday junction branch migration complex subunit RuvA (192 aa).

Positions 1 to 64 (MLGRLTGLLA…EDAQVLFGFL (64 aa)) are domain I. Residues 65-139 (TAPERETFRM…GKLGADLGPA (75 aa)) form a domain II region. The segment at 139 to 143 (AIGGK) is flexible linker. The tract at residues 144–192 (PASDAQADILQALIALGYSEREAQAAVKALPAEVGVSDGIKLALKALAR) is domain III.

It belongs to the RuvA family. As to quaternary structure, homotetramer. Forms an RuvA(8)-RuvB(12)-Holliday junction (HJ) complex. HJ DNA is sandwiched between 2 RuvA tetramers; dsDNA enters through RuvA and exits via RuvB. An RuvB hexamer assembles on each DNA strand where it exits the tetramer. Each RuvB hexamer is contacted by two RuvA subunits (via domain III) on 2 adjacent RuvB subunits; this complex drives branch migration. In the full resolvosome a probable DNA-RuvA(4)-RuvB(12)-RuvC(2) complex forms which resolves the HJ.

The protein resides in the cytoplasm. Functionally, the RuvA-RuvB-RuvC complex processes Holliday junction (HJ) DNA during genetic recombination and DNA repair, while the RuvA-RuvB complex plays an important role in the rescue of blocked DNA replication forks via replication fork reversal (RFR). RuvA specifically binds to HJ cruciform DNA, conferring on it an open structure. The RuvB hexamer acts as an ATP-dependent pump, pulling dsDNA into and through the RuvAB complex. HJ branch migration allows RuvC to scan DNA until it finds its consensus sequence, where it cleaves and resolves the cruciform DNA. The protein is Holliday junction branch migration complex subunit RuvA of Methylibium petroleiphilum (strain ATCC BAA-1232 / LMG 22953 / PM1).